Consider the following 366-residue polypeptide: Histidinol-phosphate aminotransferase 2 (366 aa).

The span at 1–11 (MQVKDQLSSLQ) shows a compositional bias: polar residues. Residues 1-21 (MQVKDQLSSLQPYKPGKSPEQ) are disordered. Residue Lys-222 is modified to N6-(pyridoxal phosphate)lysine.

The protein belongs to the class-II pyridoxal-phosphate-dependent aminotransferase family. Histidinol-phosphate aminotransferase subfamily. In terms of assembly, homodimer. Pyridoxal 5'-phosphate serves as cofactor.

The enzyme catalyses L-histidinol phosphate + 2-oxoglutarate = 3-(imidazol-4-yl)-2-oxopropyl phosphate + L-glutamate. It functions in the pathway amino-acid biosynthesis; L-histidine biosynthesis; L-histidine from 5-phospho-alpha-D-ribose 1-diphosphate: step 7/9. The sequence is that of Histidinol-phosphate aminotransferase 2 (hisC2) from Bacillus anthracis.